The following is a 1062-amino-acid chain: Probable sucrose-phosphate synthase 3 (1062 aa).

The span at 113–122 (EREQGRRDAT) shows a compositional bias: basic and acidic residues. The disordered stretch occupies residues 113–141 (EREQGRRDATEDLSEDLSEGEKGDGLGEI). S126, S130, and S156 each carry phosphoserine. A disordered region spans residues 715-735 (MDGDKPSLNGSLEPNSADPVK).

It belongs to the glycosyltransferase 1 family. Homodimer or homotetramer.

The enzyme catalyses beta-D-fructose 6-phosphate + UDP-alpha-D-glucose = sucrose 6(F)-phosphate + UDP + H(+). It functions in the pathway glycan biosynthesis; sucrose biosynthesis; sucrose from D-fructose 6-phosphate and UDP-alpha-D-glucose: step 1/2. Its activity is regulated as follows. Activity is regulated by phosphorylation and moderated by concentration of metabolites and light. Functionally, plays a role in photosynthetic sucrose synthesis by catalyzing the rate-limiting step of sucrose biosynthesis from UDP-glucose and fructose- 6-phosphate. Involved in the regulation of carbon partitioning in the leaves of plants. May regulate the synthesis of sucrose and therefore play a major role as a limiting factor in the export of photoassimilates out of the leaf. Plays a role for sucrose availability that is essential for plant growth and fiber elongation. The chain is Probable sucrose-phosphate synthase 3 (SPS3) from Arabidopsis thaliana (Mouse-ear cress).